We begin with the raw amino-acid sequence, 321 residues long: DNA repair and recombination protein RadA (321 aa).

Gly-111–Thr-118 contacts ATP.

Belongs to the eukaryotic RecA-like protein family.

Involved in DNA repair and in homologous recombination. Binds and assemble on single-stranded DNA to form a nucleoprotein filament. Hydrolyzes ATP in a ssDNA-dependent manner and promotes DNA strand exchange between homologous DNA molecules. In Sulfolobus acidocaldarius (strain ATCC 33909 / DSM 639 / JCM 8929 / NBRC 15157 / NCIMB 11770), this protein is DNA repair and recombination protein RadA.